The chain runs to 60 residues: Cecropin-B (60 aa).

Positions Met1 to Gly25 are cleaved as a signal peptide. Leucine amide is present on Leu59.

Belongs to the cecropin family.

The protein resides in the secreted. In terms of biological role, cecropins have lytic and antibacterial activity against several Gram-positive and Gram-negative bacteria. This Anopheles gambiae (African malaria mosquito) protein is Cecropin-B (CecB).